A 911-amino-acid polypeptide reads, in one-letter code: Protein translocase subunit SecA (911 aa).

Residues Gln87, 105–109 (GEGKT), and Asp512 each bind ATP. Residues 861–880 (APGLGSEQLSEEGAEVAVAS) are disordered. Cys895, Cys897, Cys906, and His907 together coordinate Zn(2+).

This sequence belongs to the SecA family. In terms of assembly, monomer and homodimer. Part of the essential Sec protein translocation apparatus which comprises SecA, SecYEG and auxiliary proteins SecDF-YajC and YidC. Requires Zn(2+) as cofactor.

Its subcellular location is the cell inner membrane. The protein resides in the cytoplasm. The catalysed reaction is ATP + H2O + cellular proteinSide 1 = ADP + phosphate + cellular proteinSide 2.. In terms of biological role, part of the Sec protein translocase complex. Interacts with the SecYEG preprotein conducting channel. Has a central role in coupling the hydrolysis of ATP to the transfer of proteins into and across the cell membrane, serving both as a receptor for the preprotein-SecB complex and as an ATP-driven molecular motor driving the stepwise translocation of polypeptide chains across the membrane. The protein is Protein translocase subunit SecA of Pseudomonas putida (strain ATCC 47054 / DSM 6125 / CFBP 8728 / NCIMB 11950 / KT2440).